We begin with the raw amino-acid sequence, 942 residues long: Isoleucine--tRNA ligase (942 aa).

Positions 58 to 68 match the 'HIGH' region motif; that stretch reads PYANGDIHLGH. Glutamate 567 lines the L-isoleucyl-5'-AMP pocket. Positions 608-612 match the 'KMSKS' region motif; it reads KMSKS. Lysine 611 lines the ATP pocket. Positions 905, 908, 925, and 928 each coordinate Zn(2+).

Belongs to the class-I aminoacyl-tRNA synthetase family. IleS type 1 subfamily. Monomer. The cofactor is Zn(2+).

It is found in the cytoplasm. The catalysed reaction is tRNA(Ile) + L-isoleucine + ATP = L-isoleucyl-tRNA(Ile) + AMP + diphosphate. Functionally, catalyzes the attachment of isoleucine to tRNA(Ile). As IleRS can inadvertently accommodate and process structurally similar amino acids such as valine, to avoid such errors it has two additional distinct tRNA(Ile)-dependent editing activities. One activity is designated as 'pretransfer' editing and involves the hydrolysis of activated Val-AMP. The other activity is designated 'posttransfer' editing and involves deacylation of mischarged Val-tRNA(Ile). This Pseudoalteromonas translucida (strain TAC 125) protein is Isoleucine--tRNA ligase.